Here is a 967-residue protein sequence, read N- to C-terminus: Protein moonraker (967 aa).

Residues 178–201 (SHPGQSDLTVPNSPPTHDPGLQPH) form a disordered region. Over residues 179-188 (HPGQSDLTVP) the composition is skewed to polar residues. 2 positions are modified to phosphoserine: Ser287 and Ser409. Disordered regions lie at residues 401–431 (ALER…SRPS) and 490–601 (KAGK…SHLT). Polar residues predominate over residues 525–543 (QSQPHSKSRVQQTTVSSRL). Over residues 557-568 (WIPPNPTSPPAS) the composition is skewed to pro residues. Residues 616–642 (AETSKRLKELEELKAKEIDSMQKQRLD) adopt a coiled-coil conformation. Residues Ser700 and Ser826 each carry the phosphoserine modification. A disordered region spans residues 849–872 (RPCNGNSLDESVGTEEGSEKREAP). The segment at 885-967 (GRAPLFVPPG…FTSEFLEAAT (83 aa)) is necessary and sufficient for CEP20-binding.

Interacts with CEP63. Interacts with WDR62. Forms a complex with OFD1 and CEP20/FOR20. Interacts with PCM1.

The protein localises to the cytoplasm. It is found in the cytoskeleton. The protein resides in the microtubule organizing center. It localises to the centrosome. Its subcellular location is the centriole. The protein localises to the centriolar satellite. In terms of biological role, involved in centriole duplication. Positively regulates CEP63 centrosomal localization. Required for WDR62 centrosomal localization and promotes the centrosomal localization of CDK2. May play a role in cilium assembly. This Homo sapiens (Human) protein is Protein moonraker (KIAA0753).